Reading from the N-terminus, the 691-residue chain is Calcium-binding and coiled-coil domain-containing protein 1 (691 aa).

A p300 KIX-binding region spans residues 1 to 30 (MEESPLSRAPSRGGVNFLNVARTYIPNTKV). Residues 1–190 (MEESPLSRAP…VQELERALAT (190 aa)) form an N-terminal AD (CTNNB1 binding site) region. Position 4 is a phosphoserine (serine 4). An interaction with GATA1 region spans residues 45–125 (SDWIGIFKVE…FQFREPRPMD (81 aa)). 3 coiled-coil regions span residues 145-205 (KATV…YKGI), 232-339 (ELED…AELE), and 417-514 (QSVE…ADEK). The interval 501–691 (RKLEARLEKV…FSTQDPFTFE (191 aa)) is C-terminal AD (CTNNB1 binding site); interaction with CCAR1. The interval 514–606 (KWNEDATTED…SEAEDEKSVL (93 aa)) is disordered. The UBZ1-type zinc finger occupies 653–679 (WKECPICKERFPAESDKDALEDHMDGH). Zn(2+) contacts are provided by cysteine 656, cysteine 659, histidine 675, and histidine 679.

This sequence belongs to the CALCOCO family. Part of a calphoglin complex consisting of CALCOCO1, PPA1 and PGM. Interacts with the bHLH-PAS domains of GRIP1, AHR and ARNT. Interacts with CTNNB1 via both its N- and C-terminal regions. Interacts with EP300. Interacts with CCAR1 (via N-terminus) and GATA1.

The protein localises to the cytoplasm. It localises to the nucleus. In terms of biological role, functions as a coactivator for aryl hydrocarbon and nuclear receptors (NR). Recruited to promoters through its contact with the N-terminal basic helix-loop-helix-Per-Arnt-Sim (PAS) domain of transcription factors or coactivators, such as NCOA2. During ER-activation acts synergistically in combination with other NCOA2-binding proteins, such as EP300, CREBBP and CARM1. Involved in the transcriptional activation of target genes in the Wnt/CTNNB1 pathway. Functions as a secondary coactivator in LEF1-mediated transcriptional activation via its interaction with CTNNB1. Coactivator function for nuclear receptors and LEF1/CTNNB1 involves differential utilization of two different activation regions. In association with CCAR1 enhances GATA1- and MED1-mediated transcriptional activation from the gamma-globin promoter during erythroid differentiation of K562 erythroleukemia cells. Seems to enhance inorganic pyrophosphatase thus activating phosphogluomutase (PMG). Probably functions as a component of the calphoglin complex, which is involved in linking cellular metabolism (phosphate and glucose metabolism) with other core functions including protein synthesis and degradation, calcium signaling and cell growth. This chain is Calcium-binding and coiled-coil domain-containing protein 1 (CALCOCO1), found in Homo sapiens (Human).